The sequence spans 396 residues: 8-amino-7-oxononanoate synthase (396 aa).

A substrate-binding site is contributed by Arg-31. Residue 118-119 (GY) participates in pyridoxal 5'-phosphate binding. Substrate is bound at residue His-143. Pyridoxal 5'-phosphate contacts are provided by Ser-189, His-217, and Thr-245. An N6-(pyridoxal phosphate)lysine modification is found at Lys-248. Residue Thr-362 coordinates substrate.

This sequence belongs to the class-II pyridoxal-phosphate-dependent aminotransferase family. BioF subfamily. In terms of assembly, homodimer. Pyridoxal 5'-phosphate is required as a cofactor.

The catalysed reaction is 6-carboxyhexanoyl-[ACP] + L-alanine + H(+) = (8S)-8-amino-7-oxononanoate + holo-[ACP] + CO2. It functions in the pathway cofactor biosynthesis; biotin biosynthesis. Catalyzes the decarboxylative condensation of pimeloyl-[acyl-carrier protein] and L-alanine to produce 8-amino-7-oxononanoate (AON), [acyl-carrier protein], and carbon dioxide. In Methylobacillus flagellatus (strain ATCC 51484 / DSM 6875 / VKM B-1610 / KT), this protein is 8-amino-7-oxononanoate synthase.